The chain runs to 325 residues: Hydroxymethylglutaryl-CoA lyase, mitochondrial (325 aa).

Residues 1–27 constitute a mitochondrion transit peptide; that stretch reads MAAMTKALPRRLVGLASLRAVSTSSMD. The region spanning 33–300 is the Pyruvate carboxyltransferase domain; the sequence is VKIVEVGPRD…HTGVNLQKLL (268 aa). R41 is a substrate binding site. D42 is an a divalent metal cation binding site. An N6-acetyllysine; alternate modification is found at K48. K48 carries the post-translational modification N6-succinyllysine; alternate. K111 carries the N6-acetyllysine modification. Residues K137 and K179 each carry the N6-acetyllysine; alternate modification. An N6-succinyllysine; alternate mark is found at K137 and K179. H233 and H235 together coordinate a divalent metal cation. The active site involves C266. N275 is an a divalent metal cation binding site. The short motif at 323–325 is the Microbody targeting signal element; sequence CKL. K324 carries the post-translational modification N6-acetyllysine.

It belongs to the HMG-CoA lyase family. Homodimer; disulfide-linked. Can also form homotetramers.

It localises to the mitochondrion matrix. The protein resides in the peroxisome. The catalysed reaction is (3S)-3-hydroxy-3-methylglutaryl-CoA = acetoacetate + acetyl-CoA. Its pathway is metabolic intermediate metabolism; (S)-3-hydroxy-3-methylglutaryl-CoA degradation; acetoacetate from (S)-3-hydroxy-3-methylglutaryl-CoA: step 1/1. Its function is as follows. Mitochondrial 3-hydroxy-3-methylglutaryl-CoA lyase that catalyzes a cation-dependent cleavage of (S)-3-hydroxy-3-methylglutaryl-CoA into acetyl-CoA and acetoacetate, a key step in ketogenesis. Terminal step in leucine catabolism. Ketone bodies (beta-hydroxybutyrate, acetoacetate and acetone) are essential as an alternative source of energy to glucose, as lipid precursors and as regulators of metabolism. The polypeptide is Hydroxymethylglutaryl-CoA lyase, mitochondrial (HMGCL) (Macaca fascicularis (Crab-eating macaque)).